Here is a 325-residue protein sequence, read N- to C-terminus: Glutaminase (325 aa).

Substrate-binding residues include S76, N125, E169, N176, Y200, Y252, and V270.

Belongs to the glutaminase family. In terms of assembly, homotetramer.

The catalysed reaction is L-glutamine + H2O = L-glutamate + NH4(+). The chain is Glutaminase from Clavibacter michiganensis subsp. michiganensis (strain NCPPB 382).